Here is a 237-residue protein sequence, read N- to C-terminus: Ras-related protein Rab-23 (237 aa).

Residue Ala19 participates in GDP binding. Positions 20, 21, 22, 23, and 24 each coordinate GTP. Residues Gly21, Lys22, Ser23, Ser24, and Asp37 each coordinate GDP. Ser23 provides a ligand contact to Mg(2+). A Switch 1 motif is present at residues 28-46 (RYCKGIFTKDYKKTIGVDF). Tyr38 serves as a coordination point for GTP. Lys40 is a binding site for GDP. Residue Thr41 participates in GTP binding. Positions 41 and 64 each coordinate Mg(2+). Positions 65–84 (TAGQEEFDAITKAYYRGAQA) match the Switch 2 motif. GTP contacts are provided by Gly67, Asn121, Lys122, Asp124, Ser151, Val152, and Lys153. Positions 121, 122, and 124 each coordinate GDP. The GDP site is built by Val152 and Lys153. A phosphoserine mark is found at Ser186 and Ser187. A disordered region spans residues 204–237 (QNSSSLNGGDVINLRPNKQRTKRTRNPFSSCSVP). Cys234 is subject to Cysteine methyl ester. Residue Cys234 is the site of S-geranylgeranyl cysteine attachment. A propeptide spans 235 to 237 (SVP) (removed in mature form).

The protein belongs to the small GTPase superfamily. Rab family. Interacts with SUFU. The cofactor is Mg(2+). In terms of tissue distribution, detected in brain neurons (at protein level). Forebrain and midbrain.

Its subcellular location is the cell membrane. The protein localises to the cytoplasm. It is found in the endosome membrane. It localises to the cytoplasmic vesicle. The protein resides in the autophagosome. Its subcellular location is the phagosome. The protein localises to the phagosome membrane. It carries out the reaction GTP + H2O = GDP + phosphate + H(+). Its activity is regulated as follows. Regulated by guanine nucleotide exchange factors (GEFs) which promote the exchange of bound GDP for free GTP. Regulated by GTPase activating proteins (GAPs) which increase the GTP hydrolysis activity. Inhibited by GDP dissociation inhibitors (GDIs). In terms of biological role, the small GTPases Rab are key regulators of intracellular membrane trafficking, from the formation of transport vesicles to their fusion with membranes. Rabs cycle between an inactive GDP-bound form and an active GTP-bound form that is able to recruit to membranes different set of downstream effectors directly responsible for vesicle formation, movement, tethering and fusion. Plays a role in autophagic vacuole assembly, and mediates defense against pathogens, such as S.aureus, by promoting their capture by autophagosomes that then merge with lysosomes. Together with SUFU, prevents nuclear import of GLI1, and thereby inhibits GLI1 transcription factor activity. Regulates GLI1 in differentiating chondrocytes. Likewise, regulates GLI3 proteolytic processing and modulates GLI2 and GLI3 transcription factor activity. This chain is Ras-related protein Rab-23, found in Mus musculus (Mouse).